The sequence spans 229 residues: Enolase-phosphatase E1 (229 aa).

Belongs to the HAD-like hydrolase superfamily. MasA/MtnC family. As to quaternary structure, monomer. It depends on Mg(2+) as a cofactor.

The enzyme catalyses 5-methylsulfanyl-2,3-dioxopentyl phosphate + H2O = 1,2-dihydroxy-5-(methylsulfanyl)pent-1-en-3-one + phosphate. Its pathway is amino-acid biosynthesis; L-methionine biosynthesis via salvage pathway; L-methionine from S-methyl-5-thio-alpha-D-ribose 1-phosphate: step 3/6. It functions in the pathway amino-acid biosynthesis; L-methionine biosynthesis via salvage pathway; L-methionine from S-methyl-5-thio-alpha-D-ribose 1-phosphate: step 4/6. Its function is as follows. Bifunctional enzyme that catalyzes the enolization of 2,3-diketo-5-methylthiopentyl-1-phosphate (DK-MTP-1-P) into the intermediate 2-hydroxy-3-keto-5-methylthiopentenyl-1-phosphate (HK-MTPenyl-1-P), which is then dephosphorylated to form the acireductone 1,2-dihydroxy-3-keto-5-methylthiopentene (DHK-MTPene). In Pectobacterium carotovorum subsp. carotovorum (strain PC1), this protein is Enolase-phosphatase E1.